Consider the following 380-residue polypeptide: Cytochrome b (380 aa).

Helical transmembrane passes span 34–54 (FGSL…LLAM), 78–99 (WLIR…FLHI), 114–134 (WNTG…GYVL), and 179–199 (FFAL…IHLT). The heme b site is built by His-84 and His-98. Residues His-183 and His-197 each contribute to the heme b site. His-202 contacts a ubiquinone. 4 consecutive transmembrane segments (helical) span residues 227–247 (LKDI…ALFS), 289–309 (LGGV…PFLH), 321–341 (LSQI…WIGS), and 348–368 (FIII…ILFP).

The protein belongs to the cytochrome b family. The cytochrome bc1 complex contains 11 subunits: 3 respiratory subunits (MT-CYB, CYC1 and UQCRFS1), 2 core proteins (UQCRC1 and UQCRC2) and 6 low-molecular weight proteins (UQCRH/QCR6, UQCRB/QCR7, UQCRQ/QCR8, UQCR10/QCR9, UQCR11/QCR10 and a cleavage product of UQCRFS1). This cytochrome bc1 complex then forms a dimer. Heme b is required as a cofactor.

It localises to the mitochondrion inner membrane. In terms of biological role, component of the ubiquinol-cytochrome c reductase complex (complex III or cytochrome b-c1 complex) that is part of the mitochondrial respiratory chain. The b-c1 complex mediates electron transfer from ubiquinol to cytochrome c. Contributes to the generation of a proton gradient across the mitochondrial membrane that is then used for ATP synthesis. In Pavo muticus (Green peafowl), this protein is Cytochrome b (MT-CYB).